Here is a 145-residue protein sequence, read N- to C-terminus: D-aminoacyl-tRNA deacylase (145 aa).

The Gly-cisPro motif, important for rejection of L-amino acids motif lies at 137 to 138; that stretch reads GP.

This sequence belongs to the DTD family. As to quaternary structure, homodimer.

The protein resides in the cytoplasm. The catalysed reaction is glycyl-tRNA(Ala) + H2O = tRNA(Ala) + glycine + H(+). It catalyses the reaction a D-aminoacyl-tRNA + H2O = a tRNA + a D-alpha-amino acid + H(+). Functionally, an aminoacyl-tRNA editing enzyme that deacylates mischarged D-aminoacyl-tRNAs. Also deacylates mischarged glycyl-tRNA(Ala), protecting cells against glycine mischarging by AlaRS. Acts via tRNA-based rather than protein-based catalysis; rejects L-amino acids rather than detecting D-amino acids in the active site. By recycling D-aminoacyl-tRNA to D-amino acids and free tRNA molecules, this enzyme counteracts the toxicity associated with the formation of D-aminoacyl-tRNA entities in vivo and helps enforce protein L-homochirality. The protein is D-aminoacyl-tRNA deacylase of Pseudomonas fluorescens (strain SBW25).